The chain runs to 132 residues: uncharacterized protein (132 aa).

The BIG2 domain maps to 45-115; sequence VHMEKHKLKI…VVIVTTAEGK (71 aa).

It to B.anthracis BA1245.

This is an uncharacterized protein from Bacillus cereus (strain ATCC 14579 / DSM 31 / CCUG 7414 / JCM 2152 / NBRC 15305 / NCIMB 9373 / NCTC 2599 / NRRL B-3711).